We begin with the raw amino-acid sequence, 347 residues long: Holliday junction branch migration complex subunit RuvB (347 aa).

Positions Met-1 to Tyr-183 are large ATPase domain (RuvB-L). Residues Leu-22, Arg-23, Gly-64, Lys-67, Thr-68, Thr-69, Glu-130–Phe-132, Arg-173, Tyr-183, and Arg-220 each bind ATP. Residue Thr-68 coordinates Mg(2+). The interval Thr-184–Glu-254 is small ATPAse domain (RuvB-S). The head domain (RuvB-H) stretch occupies residues Ala-257–Glu-347. Residues Arg-293, Arg-312, and Arg-317 each contribute to the DNA site.

Belongs to the RuvB family. Homohexamer. Forms an RuvA(8)-RuvB(12)-Holliday junction (HJ) complex. HJ DNA is sandwiched between 2 RuvA tetramers; dsDNA enters through RuvA and exits via RuvB. An RuvB hexamer assembles on each DNA strand where it exits the tetramer. Each RuvB hexamer is contacted by two RuvA subunits (via domain III) on 2 adjacent RuvB subunits; this complex drives branch migration. In the full resolvosome a probable DNA-RuvA(4)-RuvB(12)-RuvC(2) complex forms which resolves the HJ.

The protein localises to the cytoplasm. The enzyme catalyses ATP + H2O = ADP + phosphate + H(+). Functionally, the RuvA-RuvB-RuvC complex processes Holliday junction (HJ) DNA during genetic recombination and DNA repair, while the RuvA-RuvB complex plays an important role in the rescue of blocked DNA replication forks via replication fork reversal (RFR). RuvA specifically binds to HJ cruciform DNA, conferring on it an open structure. The RuvB hexamer acts as an ATP-dependent pump, pulling dsDNA into and through the RuvAB complex. RuvB forms 2 homohexamers on either side of HJ DNA bound by 1 or 2 RuvA tetramers; 4 subunits per hexamer contact DNA at a time. Coordinated motions by a converter formed by DNA-disengaged RuvB subunits stimulates ATP hydrolysis and nucleotide exchange. Immobilization of the converter enables RuvB to convert the ATP-contained energy into a lever motion, pulling 2 nucleotides of DNA out of the RuvA tetramer per ATP hydrolyzed, thus driving DNA branch migration. The RuvB motors rotate together with the DNA substrate, which together with the progressing nucleotide cycle form the mechanistic basis for DNA recombination by continuous HJ branch migration. Branch migration allows RuvC to scan DNA until it finds its consensus sequence, where it cleaves and resolves cruciform DNA. In Rhodopseudomonas palustris (strain BisA53), this protein is Holliday junction branch migration complex subunit RuvB.